Consider the following 464-residue polypeptide: L-cysteine desulfhydrase-like protein lolT2 (464 aa).

Position 227 is an N6-(pyridoxal phosphate)lysine (K227).

Belongs to the class-V pyridoxal-phosphate-dependent aminotransferase family. Pyridoxal 5'-phosphate is required as a cofactor.

It functions in the pathway alkaloid biosynthesis. L-cysteine desulfhydrase-like protein; part of the gene cluster that mediates the biosynthesis of loline alkaloids, potent insecticidal agents composed of a pyrrolizidine ring system and an uncommon ether bridge linking carbons 2 and 7. Lolines are structurally differentiated by the various modifications of the L-amino group and include norloline, loline, N-methylloline, N-acetylloline, N-acetylnorloline, and N-formylloline. The first committed step is the condensation of O-acetyl-L-homoserine (derived from L-aspartic acid) and L-proline, probably catalyzed by the gamma-type pyridoxal 5'-phosphate(PLP)-dependent enzyme lolC, to give the diamino diacid, NACPP. Ensuing cyclization, decarboxylation, and acetylation steps yield 1-exo-acetamidopyrrolizidine (AcAP). LolO is required for installation of the ether bridge upon the pathway intermediate, 1-exo-acetamidopyrrolizidine (AcAP). In sequential 2-oxoglutarate- and O(2)-consuming steps, lolO removes hydrogens from C2 and C7 of AcAP to form both carbon-oxygen bonds in N-acetylnorloline (NANL), the precursor to all other lolines. The enzymes lolD, lolE, lolF and lolT have also been proposed to be involved in the ether-bridge installation. Further processing of the exocyclic moiety of NANL by fungal N-acetamidase (LolN), methyltransferase (LolM), and cytochrome P450 (LolP) enzymes, with occasional involvement of a plant acetyltransferase, generates the other known lolines. LolN transforms NANL to norlonine which is monomethylated and dimethylated to respectively lonine and N-methyllonine (NML) by lolM. LolP catalyzes hydroxylation of the methyl group in N-methylloline (NML) and further oxygenation to N-formylloline (NFL). A plant acetyltransferase is responsible for the acetylation of loline to form N-acetylloline (NAL). LolA might interact with aspartate kinase to prevent feedback inhibition of its activity by these end products and thereby promote production of L-homoserine from L-aspartate. In Epichloe uncinata (Endophyte fungus), this protein is L-cysteine desulfhydrase-like protein lolT2.